A 304-amino-acid polypeptide reads, in one-letter code: uncharacterized protein (304 aa).

A signal peptide spans 1 to 15 (MTRPRPPLGPAMAGA). The Thioredoxin domain maps to 28 to 151 (NAAASTDADR…LSRWVDSLLS (124 aa)).

This is an uncharacterized protein from Mycobacterium bovis (strain ATCC BAA-935 / AF2122/97).